We begin with the raw amino-acid sequence, 69 residues long: Conotoxin Lt5.10 (69 aa).

Residues 1 to 19 (MLCLPVFIILLLLASPAAP) form the signal peptide. A propeptide spanning residues 20–54 (KSLETRIQNDLIRAGLTDADLKTEKGFLSGLLNVA) is cleaved from the precursor.

This sequence belongs to the conotoxin T superfamily. Contains 2 disulfide bonds that can be either 'C1-C3, C2-C4' or 'C1-C4, C2-C3', since these disulfide connectivities have been observed for conotoxins with cysteine framework V (for examples, see AC P0DQQ7 and AC P81755). As to expression, expressed by the venom duct.

It is found in the secreted. This Conus litteratus (Lettered cone) protein is Conotoxin Lt5.10.